The following is a 107-amino-acid chain: Large ribosomal subunit protein uL24 (107 aa).

This sequence belongs to the universal ribosomal protein uL24 family. Part of the 50S ribosomal subunit.

Functionally, one of two assembly initiator proteins, it binds directly to the 5'-end of the 23S rRNA, where it nucleates assembly of the 50S subunit. One of the proteins that surrounds the polypeptide exit tunnel on the outside of the subunit. In Neisseria meningitidis serogroup C (strain 053442), this protein is Large ribosomal subunit protein uL24.